The following is a 470-amino-acid chain: Light-independent protochlorophyllide reductase subunit N (470 aa).

[4Fe-4S] cluster-binding residues include Cys-23, Cys-48, and Cys-108.

It belongs to the BchN/ChlN family. Protochlorophyllide reductase is composed of three subunits; ChlL, ChlN and ChlB. Forms a heterotetramer of two ChlB and two ChlN subunits. [4Fe-4S] cluster is required as a cofactor.

It localises to the plastid. It is found in the chloroplast. The enzyme catalyses chlorophyllide a + oxidized 2[4Fe-4S]-[ferredoxin] + 2 ADP + 2 phosphate = protochlorophyllide a + reduced 2[4Fe-4S]-[ferredoxin] + 2 ATP + 2 H2O. It participates in porphyrin-containing compound metabolism; chlorophyll biosynthesis (light-independent). In terms of biological role, component of the dark-operative protochlorophyllide reductase (DPOR) that uses Mg-ATP and reduced ferredoxin to reduce ring D of protochlorophyllide (Pchlide) to form chlorophyllide a (Chlide). This reaction is light-independent. The NB-protein (ChlN-ChlB) is the catalytic component of the complex. The sequence is that of Light-independent protochlorophyllide reductase subunit N from Zygnema circumcarinatum (Green alga).